The sequence spans 252 residues: UPF0246 protein Fjoh_4905 (252 aa).

Belongs to the UPF0246 family.

The chain is UPF0246 protein Fjoh_4905 from Flavobacterium johnsoniae (strain ATCC 17061 / DSM 2064 / JCM 8514 / BCRC 14874 / CCUG 350202 / NBRC 14942 / NCIMB 11054 / UW101) (Cytophaga johnsonae).